The primary structure comprises 131 residues: Fumarate reductase subunit C (131 aa).

The next 3 membrane-spanning stretches (helical) occupy residues 30 to 50 (EGTC…VFAL), 58 to 78 (AGFV…VTLI), and 109 to 129 (IVRG…AVAL).

The protein belongs to the FrdC family. Part of an enzyme complex containing four subunits: a flavoprotein (FrdA), an iron-sulfur protein (FrdB), and two hydrophobic anchor proteins (FrdC and FrdD).

The protein resides in the cell inner membrane. Two distinct, membrane-bound, FAD-containing enzymes are responsible for the catalysis of fumarate and succinate interconversion; fumarate reductase is used in anaerobic growth, and succinate dehydrogenase is used in aerobic growth. Anchors the catalytic components of the fumarate reductase complex to the cell inner membrane, binds quinones. The polypeptide is Fumarate reductase subunit C (Proteus mirabilis (strain HI4320)).